We begin with the raw amino-acid sequence, 666 residues long: Non-receptor tyrosine-protein kinase TNK1 (666 aa).

Position 96 is a phosphoserine (Ser-96). The Protein kinase domain occupies 116–383 (VRRGELLGSG…LEGLLQEAWL (268 aa)). ATP contacts are provided by residues 122–130 (LGSGCFGVV) and Lys-148. The Proton acceptor role is filled by Asp-245. Ser-255 carries the post-translational modification Phosphoserine. Positions 381–441 (AWLSEGRCVR…PASAVTLADL (61 aa)) constitute an SH3 domain. The tract at residues 442–589 (GGSPVTHPAH…VPSGGPLSDP (148 aa)) is disordered. The span at 457–473 (HGEKCRGGTDGDREKAT) shows a compositional bias: basic and acidic residues. Ser-498 bears the Phosphoserine mark. The residue at position 510 (Thr-510) is a Phosphothreonine. Ser-515 carries the post-translational modification Phosphoserine. A compositionally biased stretch (pro residues) spans 531–544 (DLPPRPPDLPPRPP). Ser-582 is subject to Phosphoserine.

This sequence belongs to the protein kinase superfamily. Tyr protein kinase family. Interacts with the SH3 domain of PLCG1 via its Pro-rich domain. Post-translationally, autophosphorylated on tyrosine residues. As to expression, expressed in whole embryo and all adult tissues examined including liver, kidney, heart, brain, skeletal muscle and intestine. Also detected in various myeloid- and lymphoid-derived cell lines.

It localises to the membrane. Its subcellular location is the cytoplasm. The catalysed reaction is L-tyrosyl-[protein] + ATP = O-phospho-L-tyrosyl-[protein] + ADP + H(+). In terms of biological role, may function in signaling pathways utilized broadly during fetal development and more selectively in adult tissues and in cells of the lymphohematopoietic system. Could specifically be involved in phospholipid signal transduction. Involved in negative regulation of cell growth. Has tumor suppressor properties. Plays a negative regulatory role in the Ras-MAPK pathway. The chain is Non-receptor tyrosine-protein kinase TNK1 from Mus musculus (Mouse).